A 25-amino-acid polypeptide reads, in one-letter code: Bioremediase (25 aa).

One can recognise an Alpha-carbonic anhydrase domain in the interval 1–25 (DFPIANGERQSPVDIDTKAVVQDPA). Residues 1–25 (DFPIANGERQSPVDIDTKAVVQDPA) are disordered.

Belongs to the alpha-carbonic anhydrase family. The cofactor is Zn(2+).

Releases silica from silica-rich substances. The protein is Bioremediase of Thermoanaerobacter sp.